The primary structure comprises 132 residues: Large ribosomal subunit protein uL14 (132 aa).

This sequence belongs to the universal ribosomal protein uL14 family. In terms of assembly, part of the 50S ribosomal subunit. Forms a cluster with proteins L3 and L24e, part of which may contact the 16S rRNA in 2 intersubunit bridges.

Its function is as follows. Binds to 23S rRNA. Forms part of two intersubunit bridges in the 70S ribosome. The polypeptide is Large ribosomal subunit protein uL14 (Halobacterium salinarum (strain ATCC 29341 / DSM 671 / R1)).